We begin with the raw amino-acid sequence, 559 residues long: Formate--tetrahydrofolate ligase (559 aa).

68-75 (TPAGEGKT) serves as a coordination point for ATP.

The protein belongs to the formate--tetrahydrofolate ligase family.

It carries out the reaction (6S)-5,6,7,8-tetrahydrofolate + formate + ATP = (6R)-10-formyltetrahydrofolate + ADP + phosphate. It functions in the pathway one-carbon metabolism; tetrahydrofolate interconversion. This Rhizobium meliloti (strain 1021) (Ensifer meliloti) protein is Formate--tetrahydrofolate ligase.